The following is a 656-amino-acid chain: DNA ligase (656 aa).

NAD(+)-binding positions include 32–36, 81–82, and E112; these read DEEYD and SM. The active-site N6-AMP-lysine intermediate is K114. Residues R135, E169, K284, and K308 each contribute to the NAD(+) site. The Zn(2+) site is built by C402, C405, C418, and C423. A BRCT domain is found at 577 to 656; sequence VQKTPFTGKT…DMWKMLKEGK (80 aa).

It belongs to the NAD-dependent DNA ligase family. LigA subfamily. Requires Mg(2+) as cofactor. Mn(2+) is required as a cofactor.

The catalysed reaction is NAD(+) + (deoxyribonucleotide)n-3'-hydroxyl + 5'-phospho-(deoxyribonucleotide)m = (deoxyribonucleotide)n+m + AMP + beta-nicotinamide D-nucleotide.. DNA ligase that catalyzes the formation of phosphodiester linkages between 5'-phosphoryl and 3'-hydroxyl groups in double-stranded DNA using NAD as a coenzyme and as the energy source for the reaction. It is essential for DNA replication and repair of damaged DNA. The sequence is that of DNA ligase from Nautilia profundicola (strain ATCC BAA-1463 / DSM 18972 / AmH).